A 264-amino-acid polypeptide reads, in one-letter code: Phosphonoacetaldehyde hydrolase (264 aa).

The active-site Nucleophile is the aspartate 9. Aspartate 9 and alanine 11 together coordinate Mg(2+). Catalysis depends on lysine 50, which acts as the Schiff-base intermediate with substrate. Aspartate 183 is a binding site for Mg(2+).

It belongs to the HAD-like hydrolase superfamily. PhnX family. As to quaternary structure, homodimer. Requires Mg(2+) as cofactor.

The catalysed reaction is phosphonoacetaldehyde + H2O = acetaldehyde + phosphate + H(+). Involved in phosphonate degradation. The sequence is that of Phosphonoacetaldehyde hydrolase from Bacillus cereus (strain AH187).